Consider the following 341-residue polypeptide: Biotin synthase (341 aa).

Residues 40–264 (NSVKLNYLVN…VAPRSELRIA (225 aa)) form the Radical SAM core domain. C55, C59, and C62 together coordinate [4Fe-4S] cluster. [2Fe-2S] cluster-binding residues include C99, C132, C192, and R262. The disordered stretch occupies residues 317–341 (ASAPQGGVEPVLRKRGAGTELQPNA).

It belongs to the radical SAM superfamily. Biotin synthase family. As to quaternary structure, homodimer. [4Fe-4S] cluster is required as a cofactor. It depends on [2Fe-2S] cluster as a cofactor.

The catalysed reaction is (4R,5S)-dethiobiotin + (sulfur carrier)-SH + 2 reduced [2Fe-2S]-[ferredoxin] + 2 S-adenosyl-L-methionine = (sulfur carrier)-H + biotin + 2 5'-deoxyadenosine + 2 L-methionine + 2 oxidized [2Fe-2S]-[ferredoxin]. It functions in the pathway cofactor biosynthesis; biotin biosynthesis; biotin from 7,8-diaminononanoate: step 2/2. Functionally, catalyzes the conversion of dethiobiotin (DTB) to biotin by the insertion of a sulfur atom into dethiobiotin via a radical-based mechanism. This is Biotin synthase from Renibacterium salmoninarum (strain ATCC 33209 / DSM 20767 / JCM 11484 / NBRC 15589 / NCIMB 2235).